The primary structure comprises 652 residues: Acetyl-coenzyme A synthetase (652 aa).

CoA is bound by residues 191 to 194 (RAGR), Thr-311, and Asn-335. Residues 387-389 (GEP), 411-416 (DTWWQT), Asp-500, and Arg-515 each bind ATP. Ser-523 provides a ligand contact to CoA. Arg-526 provides a ligand contact to ATP. Mg(2+) is bound by residues Val-537, His-539, and Ile-542. Arg-584 lines the CoA pocket. An N6-acetyllysine modification is found at Lys-609.

This sequence belongs to the ATP-dependent AMP-binding enzyme family. It depends on Mg(2+) as a cofactor. Post-translationally, acetylated. Deacetylation by the SIR2-homolog deacetylase activates the enzyme.

The catalysed reaction is acetate + ATP + CoA = acetyl-CoA + AMP + diphosphate. In terms of biological role, catalyzes the conversion of acetate into acetyl-CoA (AcCoA), an essential intermediate at the junction of anabolic and catabolic pathways. Acs undergoes a two-step reaction. In the first half reaction, Acs combines acetate with ATP to form acetyl-adenylate (AcAMP) intermediate. In the second half reaction, it can then transfer the acetyl group from AcAMP to the sulfhydryl group of CoA, forming the product AcCoA. Enables the cell to use acetate during aerobic growth to generate energy via the TCA cycle, and biosynthetic compounds via the glyoxylate shunt. Acetylates CheY, the response regulator involved in flagellar movement and chemotaxis. This Yersinia pestis protein is Acetyl-coenzyme A synthetase.